The primary structure comprises 233 residues: Large ribosomal subunit protein uL1 (233 aa).

This sequence belongs to the universal ribosomal protein uL1 family. In terms of assembly, part of the 50S ribosomal subunit.

Binds directly to 23S rRNA. The L1 stalk is quite mobile in the ribosome, and is involved in E site tRNA release. Its function is as follows. Protein L1 is also a translational repressor protein, it controls the translation of the L11 operon by binding to its mRNA. This chain is Large ribosomal subunit protein uL1, found in Shewanella putrefaciens (strain CN-32 / ATCC BAA-453).